A 220-amino-acid polypeptide reads, in one-letter code: UPF0758 protein APL_1970 (220 aa).

One can recognise an MPN domain in the interval 98-220 (NINEPYLAVM…YFSFEEEKFR (123 aa)). Residues histidine 169, histidine 171, and aspartate 182 each coordinate Zn(2+). Residues 169-182 (HNHPSGNCTPSESD) carry the JAMM motif motif.

It belongs to the UPF0758 family.

The polypeptide is UPF0758 protein APL_1970 (Actinobacillus pleuropneumoniae serotype 5b (strain L20)).